A 475-amino-acid polypeptide reads, in one-letter code: uncharacterized protein (475 aa).

The segment at 42 to 292 is disordered; it reads NLQNSLTGKT…NTRKGQRHNN (251 aa). Composition is skewed to basic and acidic residues over residues 59 to 72 and 119 to 134; these read EANHTSSDKSKSED and IAEKQVEDRKLSDDSQ. Composition is skewed to polar residues over residues 150-159 and 220-242; these read ITPNFTHTPI and NNTFGSQTVSSANGKEVPQTSED. Over residues 243-263 the composition is skewed to low complexity; it reads SSSQAPHHSSSSGHAPSQQGG. Positions 277 to 289 are enriched in basic residues; that stretch reads FHHKGRNTRKGQR. Residues 319–408 form the HTH La-type RNA-binding domain; that stretch reads NPYLCDVQAF…MSIKVRRKET (90 aa). At threonine 408 the chain carries Phosphothreonine. The residue at position 410 (serine 410) is a Phosphoserine.

The protein resides in the cytoplasm. This is an uncharacterized protein from Schizosaccharomyces pombe (strain 972 / ATCC 24843) (Fission yeast).